The sequence spans 262 residues: Acyl-[acyl-carrier-protein]--UDP-N-acetylglucosamine O-acyltransferase (262 aa).

The protein belongs to the transferase hexapeptide repeat family. LpxA subfamily. In terms of assembly, homotrimer.

The protein resides in the cytoplasm. It carries out the reaction a (3R)-hydroxyacyl-[ACP] + UDP-N-acetyl-alpha-D-glucosamine = a UDP-3-O-[(3R)-3-hydroxyacyl]-N-acetyl-alpha-D-glucosamine + holo-[ACP]. Its pathway is glycolipid biosynthesis; lipid IV(A) biosynthesis; lipid IV(A) from (3R)-3-hydroxytetradecanoyl-[acyl-carrier-protein] and UDP-N-acetyl-alpha-D-glucosamine: step 1/6. Functionally, involved in the biosynthesis of lipid A, a phosphorylated glycolipid that anchors the lipopolysaccharide to the outer membrane of the cell. The polypeptide is Acyl-[acyl-carrier-protein]--UDP-N-acetylglucosamine O-acyltransferase (Enterobacter sp. (strain 638)).